The chain runs to 129 residues: Lysozyme C (129 aa).

The C-type lysozyme domain occupies 1-129 (KVYGRCELAA…VSVWTRGCRL (129 aa)). 4 disulfides stabilise this stretch: Cys-6–Cys-127, Cys-30–Cys-115, Cys-64–Cys-80, and Cys-76–Cys-94. Catalysis depends on residues Glu-35 and Asp-52.

It belongs to the glycosyl hydrolase 22 family. As to quaternary structure, monomer.

The protein localises to the secreted. It carries out the reaction Hydrolysis of (1-&gt;4)-beta-linkages between N-acetylmuramic acid and N-acetyl-D-glucosamine residues in a peptidoglycan and between N-acetyl-D-glucosamine residues in chitodextrins.. In terms of biological role, lysozymes have primarily a bacteriolytic function; those in tissues and body fluids are associated with the monocyte-macrophage system and enhance the activity of immunoagents. In Lophura leucomelanos (Kalij pheasant), this protein is Lysozyme C (LYZ).